The chain runs to 743 residues: POU domain, class 2, transcription factor 1 (743 aa).

A compositionally biased stretch (polar residues) spans 1-11 (MNNPSETSKPS). Disordered stretches follow at residues 1–34 (MNNP…QPVP), 67–95 (SLNV…SVQA), 258–283 (ATPI…EEPS), and 357–381 (SSDS…RRRK). Residues 81-95 (SQQPSQPSQQPSVQA) are compositionally biased toward low complexity. 2 positions are modified to phosphothreonine: Thr270 and Thr276. The POU-specific domain maps to 280 to 354 (EEPSDLEELE…LLEKWLNDAE (75 aa)). The residue at position 283 (Ser283) is a Phosphoserine. Residues 357–371 (SSDSSLSSPSALNSP) show a composition bias toward low complexity. The segment at residues 379-438 (RRKKRTSIETNIRVALEKSFLENQKPTSEEITMIADQLNMEKEVIRVWFCNRRQKEKRIN) is a DNA-binding region (homeobox). A phosphoserine mark is found at Ser385 and Ser448. The segment covering 494–504 (VTGTSDTTSNN) has biased composition (polar residues). Positions 494–557 (VTGTSDTTSN…TTSTPLSSPL (64 aa)) are disordered. Residues 505–557 (TATVISTAPPASSAVTSPSLSPSPSASASTSEASSASETSTTQTTSTPLSSPL) are compositionally biased toward low complexity.

Belongs to the POU transcription factor family. Class-2 subfamily. In terms of assembly, interacts with POU2AF1; the interaction increases POU2F1 transactivation activity. Interacts with NR3C1, AR, PGR and HCFC1. (Microbial infection) Associates with the herpes simplex virus VP16-induced complex; binding to HCFC1 activates the viral transcriptional activator VP16 for association with POU2F1, to form a multiprotein-DNA complex responsible for activating transcription of the viral immediate early genes. As to quaternary structure, (Microbial infection) Interacts with human herpesvirus 8 (KSHV) protein RTA/ORF50; this interaction enhances RTA/ORF50-mediated transactivation of several viral promoters including K-bZIP promoter. In terms of processing, phosphorylated by PRKDC. Ubiquitous. Isoform 2 is lymphocyte-specific.

It localises to the nucleus. Transcription factor that binds to the octamer motif (5'-ATTTGCAT-3') and activates the promoters of the genes for some small nuclear RNAs (snRNA) and of genes such as those for histone H2B and immunoglobulins. Modulates transcription transactivation by NR3C1, AR and PGR. Functionally, (Microbial infection) In case of human herpes simplex virus (HSV) infection, POU2F1 forms a multiprotein-DNA complex with the viral transactivator protein VP16 and HCFC1 thereby enabling the transcription of the viral immediate early genes. The sequence is that of POU domain, class 2, transcription factor 1 (POU2F1) from Homo sapiens (Human).